We begin with the raw amino-acid sequence, 591 residues long: V-type ATP synthase alpha chain (591 aa).

232-239 (GPFGAGKT) contributes to the ATP binding site.

It belongs to the ATPase alpha/beta chains family.

The enzyme catalyses ATP + H2O + 4 H(+)(in) = ADP + phosphate + 5 H(+)(out). Its function is as follows. Produces ATP from ADP in the presence of a proton gradient across the membrane. The V-type alpha chain is a catalytic subunit. The polypeptide is V-type ATP synthase alpha chain (Clostridium perfringens (strain SM101 / Type A)).